A 138-amino-acid polypeptide reads, in one-letter code: Phospholipase A2 crotoxin basic chain CBa2 (138 aa).

An N-terminal signal peptide occupies residues 1–16 (MRALWIVAVLLVGVEG). Cystine bridges form between C42–C131, C44–C60, C59–C111, C65–C138, C66–C104, C73–C97, and C91–C102. Positions 43, 45, and 47 each coordinate Ca(2+). H63 is an active-site residue. Ca(2+) is bound at residue D64. Residue D105 is part of the active site.

This sequence belongs to the phospholipase A2 family. Group II subfamily. D49 sub-subfamily. Heterodimer of one of the acidic (CA1, CA2, CA3 or CA4) and one of the basic (CBa1, CBa2, CBb, CBc or CBd) subunits; non-covalently linked. The acidic subunit is non-toxic, without enzymatic activity and comprises 3 peptides that are cross-linked by 5 disulfide bridges. The basic subunit is toxic, has phospholipase A2 activity and is composed of a single chain. Multiple variants of each subunit give different crotoxin complexes that can be subdivided into 2 classes: (1) those of high toxicity, low PLA2 activity (CBb, CBc and CBd linked with high affinity to any CA) and high stability (K(d)=4.5 nM) and (2) those of moderate toxicity, high PLA2 activity (CBa2 linked with low affinity to any CA) and low stability (K(d)=25 nM). Interacts with human NBD1 domain of CFTR. It depends on Ca(2+) as a cofactor. In terms of tissue distribution, expressed by the venom gland.

It localises to the secreted. The enzyme catalyses a 1,2-diacyl-sn-glycero-3-phosphocholine + H2O = a 1-acyl-sn-glycero-3-phosphocholine + a fatty acid + H(+). Its function is as follows. Heterodimer CA-CB: Crotoxin is a potent presynaptic neurotoxin that possesses phospholipase A2 (PLA2) activity and exerts a lethal action by blocking neuromuscular transmission. It consists of a non-covalent association of a basic and weakly toxic PLA2 subunit (CBa2, CBb, CBc, or CBd), with a small acidic, non-enzymatic and non-toxic subunit (CA1, CA2, CA3 or CA4). The complex acts by binding to a specific 48-kDa protein (R48) receptor located on presynaptic membranes, forming a transient ternary complex CA-CB-R48, followed by dissociation of the CA-CB complex and release of the CA subunit. At equilibrium, only the CB subunits remain associated with the specific crotoxin receptor. In addition to neurotoxicity, crotoxin has been found to exert myotoxicity, nephrotoxicity, and cardiovascular toxicity. Moreover, anti-inflammatory, immunomodulatory, anti-tumor and analgesic effects of crotoxin have also been reported. Monomer CBa2: The basic subunit of crotoxin is a snake venom phospholipase A2 (PLA2) that exhibits weak neurotoxicity (10-fold less than the heterodimer) and strong anticoagulant effects by binding to factor Xa (F10) and inhibiting the prothrombinase activity (IC(50) is 41 nM). In addition, it shows the same effects described for the heterodimer and binds the nucleotide-binding domain (NBD1) of CFTR chloride channels and increases the channel current. PLA2 catalyzes the calcium-dependent hydrolysis of the 2-acyl groups in 3-sn-phosphoglycerides. In Crotalus durissus terrificus (South American rattlesnake), this protein is Phospholipase A2 crotoxin basic chain CBa2.